We begin with the raw amino-acid sequence, 738 residues long: Isocitrate dehydrogenase [NADP] (738 aa).

Residues Asn-83 and Ser-85 each coordinate NADP(+). 5 residues coordinate D-threo-isocitrate: Ser-130, Asn-133, Arg-137, Arg-143, and Lys-253. Asn-133 contributes to the NADP(+) binding site. Asp-346 lines the Mg(2+) pocket. D-threo-isocitrate contacts are provided by Tyr-416 and Arg-543. Mg(2+) is bound by residues Asp-544 and Asp-548. Residues Gly-580, His-585, Arg-596, Asp-598, and Arg-645 each contribute to the NADP(+) site.

This sequence belongs to the monomeric-type IDH family. Monomer. The cofactor is Mg(2+). Mn(2+) serves as cofactor.

The protein localises to the cytoplasm. The enzyme catalyses D-threo-isocitrate + NADP(+) = 2-oxoglutarate + CO2 + NADPH. With respect to regulation, weakly inhibited by oxaloacetate, 2-oxoglutarate and citrate. Severely inhibited by oxaloacetate plus glyoxylate. Functionally, catalyzes the oxidative decarboxylation of isocitrate to 2-oxoglutarate and carbon dioxide with the concomitant reduction of NADP(+). Cannot use NAD(+). The protein is Isocitrate dehydrogenase [NADP] of Corynebacterium glutamicum (strain ATCC 13032 / DSM 20300 / JCM 1318 / BCRC 11384 / CCUG 27702 / LMG 3730 / NBRC 12168 / NCIMB 10025 / NRRL B-2784 / 534).